The chain runs to 526 residues: Seipin-2 (526 aa).

A disordered region spans residues 33–77 (PIRSNSHQPSSLLRRRKSAHRRDLISSDIETEPSSSSDGFDVGEK). Low complexity predominate over residues 58-70 (SSDIETEPSSSSD). 4 helical membrane passes run 195–215 (SLLT…FDPF), 224–243 (FLMA…MNPF), 258–278 (FGWG…LLVS), and 483–503 (LFVW…LVCC).

The protein belongs to the seipin family. As to expression, expressed in seeds, seedlings, leaves, stems and roots. Not detected in flowers.

It is found in the endoplasmic reticulum membrane. Involved in lipid metabolism and lipid droplet (LD) morphology, number, and size. Supports the formation of small-sized LDs and modulates triacylglycerol accumulation. Induces probably a reorganization of the endoplasmic reticulum into LD-forming domains. In Arabidopsis thaliana (Mouse-ear cress), this protein is Seipin-2.